The following is a 262-amino-acid chain: Ribose-5-phosphate isomerase A (262 aa).

Residues 33–36 (TGST), 89–92 (DGAD), and 102–105 (KGGG) each bind substrate. The active-site Proton acceptor is Glu-111. Lys-129 is a substrate binding site.

This sequence belongs to the ribose 5-phosphate isomerase family. In terms of assembly, homodimer.

The catalysed reaction is aldehydo-D-ribose 5-phosphate = D-ribulose 5-phosphate. It participates in carbohydrate degradation; pentose phosphate pathway; D-ribose 5-phosphate from D-ribulose 5-phosphate (non-oxidative stage): step 1/1. In terms of biological role, catalyzes the reversible conversion of ribose-5-phosphate to ribulose 5-phosphate. The polypeptide is Ribose-5-phosphate isomerase A (Cereibacter sphaeroides (strain KD131 / KCTC 12085) (Rhodobacter sphaeroides)).